Here is a 1186-residue protein sequence, read N- to C-terminus: MYND-type zinc finger-containing chromatin reader ZMYND8 (1186 aa).

Residues 1–12 (MDISTRSKDPGS) show a composition bias toward basic and acidic residues. The interval 1–57 (MDISTRSKDPGSAERTAQKRKFPSPPHSSNGHSPQDTSTSPIKKKKKPGLLNSNNKE) is disordered. The required for interaction with CCNT1 stretch occupies residues 1–850 (MDISTRSKDP…QQQQQQQNQQ (850 aa)). Residue S12 forms a Glycyl lysine isopeptide (Lys-Gly) (interchain with G-Cter in SUMO2) linkage. S24 is modified (phosphoserine). Glycyl lysine isopeptide (Lys-Gly) (interchain with G-Cter in SUMO2) cross-links involve residues K56 and K70. The segment at 75-268 (TDPVDVVPQD…YLAACQKRDN (194 aa)) is interaction with histone H3K4me0. Residues 75-406 (TDPVDVVPQD…VKLNFDMTAS (332 aa)) form an interaction with histone H3K14ac region. The segment at 88-133 (DFYCWVCHREGQVLCCELCPRVYHAKCLRLTSEPEGDWFCPECEKI) adopts a PHD-type zinc-finger fold. Residues 88-327 (DFYCWVCHRE…INNCYLMSKE (240 aa)) form a required for interaction with histone H3 and histone H4 region. Residues C91, C94, C103, C106, H111, C114, C127, and C130 each contribute to the Zn(2+) site. A Bromo domain is found at 145–252 (AMTMLTIEQL…KICEHEMNEI (108 aa)). C255, C258, and C274 together coordinate Zn(2+). One can recognise a PWWP domain in the interval 277–327 (PHPLVWAKLKGFPFWPAKALRDKDGQVDARFFGQHDRAWVPINNCYLMSKE). A Glycyl lysine isopeptide (Lys-Gly) (interchain with G-Cter in SUMO2) cross-link involves residue K390. T404 carries the post-translational modification Phosphothreonine. S406 carries the phosphoserine modification. The tract at residues 412 to 512 (SKPVLSGGTG…TTKTDKTSTT (101 aa)) is disordered. K413 carries the N6-acetyllysine; alternate modification. A Glycyl lysine isopeptide (Lys-Gly) (interchain with G-Cter in SUMO2); alternate cross-link involves residue K413. Phosphoserine occurs at positions 417, 425, and 432. A compositionally biased stretch (polar residues) spans 433 to 442 (PMSTNSSVHT). S444 is subject to Phosphoserine. K453 participates in a covalent cross-link: Glycyl lysine isopeptide (Lys-Gly) (interchain with G-Cter in SUMO2). Phosphoserine occurs at positions 460, 462, 465, 486, 490, and 495. Positions 472 to 489 (STASPASTKTGQAGSLSG) are enriched in polar residues. A Glycyl lysine isopeptide (Lys-Gly) (interchain with G-Cter in SUMO2) cross-link involves residue K505. Phosphoserine occurs at positions 514 and 523. K530 participates in a covalent cross-link: Glycyl lysine isopeptide (Lys-Gly) (interchain with G-Cter in SUMO2). T541 bears the Phosphothreonine mark. Position 547 is a phosphoserine (S547). Residue K549 forms a Glycyl lysine isopeptide (Lys-Gly) (interchain with G-Cter in SUMO2) linkage. The residue at position 563 (T563) is a Phosphothreonine. Residues 582–884 (TAVEHSDSED…ITQSPSTSTI (303 aa)) are disordered. Composition is skewed to basic and acidic residues over residues 585-597 (EHSD…KSDS) and 606-631 (DEQK…EPSA). Glycyl lysine isopeptide (Lys-Gly) (interchain with G-Cter in SUMO2) cross-links involve residues K611 and K645. 2 positions are modified to phosphoserine: S652 and S655. Positions 656–696 (EKADPGAVKDKASPEPEKDFSEKAKPSPHPIKDKLKGKDET) are enriched in basic and acidic residues. Residue K657 forms a Glycyl lysine isopeptide (Lys-Gly) (interchain with G-Cter in SUMO2) linkage. 5 positions are modified to phosphoserine: S668, S682, S707, S709, and S737. Residues 718–738 (GEDHSGREGRKNKKEPKEPSP) are compositionally biased toward basic and acidic residues. Position 746 is a phosphothreonine (T746). Residues S754 and S756 each carry the phosphoserine modification. Positions 766-799 (SSAQTSAAGATATTSTSSTVTVTAPAPAATGSPV) are enriched in low complexity. Residues 818 to 832 (VWNSSSKFQTSSQKW) are compositionally biased toward polar residues. Residues 835-857 (QKMQRQQQQQQQQNQQQQPQSSQ) are compositionally biased toward low complexity. Over residues 873–884 (KEITQSPSTSTI) the composition is skewed to polar residues. The tract at residues 875–1047 (ITQSPSTSTI…YCCWNTSYCD (173 aa)) is required for homodimerization. C1028, C1031, C1039, C1040, C1046, C1050, H1058, and C1062 together coordinate Zn(2+). An MYND-type zinc finger spans residues 1028–1062 (CANCKKEAIFYCCWNTSYCDYPCQQAHWPEHMKSC). The interval 1028–1062 (CANCKKEAIFYCCWNTSYCDYPCQQAHWPEHMKSC) is required for recruitment to DNA damage sites and for interaction with the NuRD complex, CHD4, HDAC1, HDAC2 and KDM1A. Residues 1071–1186 (QEADAEVNTE…KESRLDTFWD (116 aa)) are disordered. A compositionally biased stretch (low complexity) spans 1085–1103 (SSQGSSSSTQSAPSETASA). Residues 1104-1116 (SKEKETSAEKSKE) show a composition bias toward basic and acidic residues. K1115 participates in a covalent cross-link: Glycyl lysine isopeptide (Lys-Gly) (interchain with G-Cter in SUMO2). At S1119 the chain carries Phosphoserine. Polar residues predominate over residues 1121-1140 (LDLSGSRETPSSILLGSNQG). The residue at position 1141 (S1141) is a Phosphoserine. Residues 1147–1186 (NKSSWSSSDEKRGSTRSDHNTSTSTKSLLPKESRLDTFWD) form an interaction with PRKCB1 region. 2 stretches are compositionally biased toward basic and acidic residues: residues 1154-1165 (SDEKRGSTRSDH) and 1175-1186 (LPKESRLDTFWD).

In terms of assembly, monomer and homodimer. Interacts with NuRD subcomplexes containing GATAD2A. Interacts with the histone deacetylase NuRD complex subunit CHD4; the interaction is direct, appears to occur with monomeric ZMYND8, and is increased following DNA damage. Interacts (via N-terminus) with the P-TEFb complex subunit CCNT1 (via central region); the interaction is direct and the association appears to occur between homodimeric ZMYND8 and the activated form of the P-TEFb complex. Interacts (via N-terminus) with DBN1 (via ADF-H domain); the interaction leads to sequestering of ZMYND8 in the cytoplasm. Interacts with the P-TEFb complex subunit CDK9; the association appears to occur between homodimeric ZMYND8 and the activated form of the P-TEFb complex. Interacts with EZH2; the interaction is dependent on the presence of chromatin. Interacts (via MYND domain) with the NuRD complex subunit GATAD2A. Interacts with histone H3 (via N-terminus) that is both methylated at 'Lys-4' (H3K4me1) and acetylated at 'Lys-14' (H3K14ac), with histone H3 (via N-terminus) unmodified at 'Lys-4' (H3K4me0) and acetylated at 'Lys-14' (H3K14ac), and with histone H3 (via N-terminus) di-methylated at 'Lys-36' (H3K36me2). Interacts (via Bromo domain) with histone H4 acetylated at 'Lys-16' (H4K16ac). Interacts with HDAC1. Interacts with HDAC2. Interacts with KDM1A. Interacts with KDM5C. Interacts with KDM5D. Interacts in vitro with PRKCB. Interacts with RNA polymerase II subunit POLR2A phosphorylated at 'Ser-5'. Interacts with ZNF592. Interacts with ZNF687. Does not interact with GATAD2B. Expressed in neurons (at protein level). Absent in astrocytes (at protein level). Expressed in all tissues examined with highest expression in brain, lung, pancreas, and placenta. Expressed in cutaneous T-cell lymphomas (CTCL).

It is found in the nucleus. The protein localises to the chromosome. It localises to the cytoplasm. Its function is as follows. Chromatin reader that recognizes dual histone modifications such as histone H3.1 dimethylated at 'Lys-36' and histone H4 acetylated at 'Lys-16' (H3.1K36me2-H4K16ac) and histone H3 methylated at 'Lys-4' and histone H4 acetylated at 'Lys-14' (H3K4me1-H3K14ac). May act as a transcriptional corepressor for KDM5D by recognizing the dual histone signature H3K4me1-H3K14ac. May also act as a transcriptional corepressor for KDM5C and EZH2. Recognizes acetylated histone H4 and recruits the NuRD chromatin remodeling complex to damaged chromatin for transcriptional repression and double-strand break repair by homologous recombination. Also activates transcription elongation by RNA polymerase II through recruiting the P-TEFb complex to target promoters. Localizes to H3.1K36me2-H4K16ac marks at all-trans-retinoic acid (ATRA)-responsive genes and positively regulates their expression. Promotes neuronal differentiation by associating with regulatory regions within the MAPT gene, to enhance transcription of a protein-coding MAPT isoform and suppress the non-coding MAPT213 isoform. Suppresses breast cancer, and prostate cancer cell invasion and metastasis. In Homo sapiens (Human), this protein is MYND-type zinc finger-containing chromatin reader ZMYND8 (ZMYND8).